The primary structure comprises 92 residues: Phospholemman (92 aa).

The signal sequence occupies residues 1–20 (MAPLHHILVLCVGFLTTATA). Residues 21-35 (EAPQEHDPFTYDYQS) are Extracellular-facing. Residues 36–56 (LRIGGLIIAGILFILGILIVL) traverse the membrane as a helical segment. Over 57–92 (SRRCRCKFNQQQRTGEPDEEEGTFRSSIRRLSTRRR) the chain is Cytoplasmic. A lipid anchor (S-palmitoyl cysteine) is attached at Cys60. Residue Cys62 is modified to S-glutathionyl cysteine; alternate. Cys62 is lipidated: S-palmitoyl cysteine; alternate. Residues 65–92 (NQQQRTGEPDEEEGTFRSSIRRLSTRRR) form a disordered region. Phosphothreonine is present on Thr79. Ser82 bears the Phosphoserine mark. Residues Ser83 and Ser88 each carry the phosphoserine; by PKA and PKC modification. The segment covering 83 to 92 (SIRRLSTRRR) has biased composition (basic residues). Thr89 is subject to Phosphothreonine; by PKC.

It belongs to the FXYD family. As to quaternary structure, homotetramer. Monomer. Regulatory subunit of the sodium/potassium-transporting ATPase (NKA) which is composed of a catalytic alpha subunit, a non-catalytic beta subunit and an additional regulatory subunit. The monomeric form associates with NKA while the oligomeric form does not. Interacts with the catalytic alpha-1 subunit ATP1A1. Also interacts with the catalytic alpha-2 and alpha-3 subunits ATP1A2 and ATP1A3. Very little interaction with the alpha subunits ATP1A1, ATP1A2 or ATP1A3 when phosphorylated at Ser-83. Interacts with non-catalytic beta-1 subunit ATP1B1. Oxidative stress decreases interaction with ATP1A1 but increases interaction with ATP1B1. Major plasma membrane substrate for cAMP-dependent protein kinase (PKA) and protein kinase C (PKC) in several different tissues. Phosphorylated in response to insulin and adrenergic stimulation. Phosphorylation at Ser-88 stimulates sodium/potassium-transporting ATPase activity while the unphosphorylated form inhibits sodium/potassium-transporting ATPase activity. Phosphorylation increases tetramerization, decreases binding to ATP1A1 and reduces inhibition of ATP1A1 activity. Phosphorylation at Ser-83 leads to greatly reduced interaction with ATP1A1, ATP1A2 and ATP1A3. May be phosphorylated by DMPK. In terms of processing, palmitoylation increases half-life and stability and is enhanced upon phosphorylation at Ser-88 by PKA. Present in heart, esophagus, stomach, aorta, skeletal muscle, smooth muscle, and liver but absent from brain and kidney.

It localises to the cell membrane. The protein resides in the sarcolemma. It is found in the apical cell membrane. The protein localises to the membrane. Its subcellular location is the caveola. It localises to the T-tubule. In terms of biological role, associates with and regulates the activity of the sodium/potassium-transporting ATPase (NKA) which transports Na(+) out of the cell and K(+) into the cell. Inhibits NKA activity in its unphosphorylated state and stimulates activity when phosphorylated. Reduces glutathionylation of the NKA beta-1 subunit ATP1B1, thus reversing glutathionylation-mediated inhibition of ATP1B1. Contributes to female sexual development by maintaining the excitability of neurons which secrete gonadotropin-releasing hormone. The sequence is that of Phospholemman from Canis lupus familiaris (Dog).